The sequence spans 232 residues: Probable caffeoyl-CoA O-methyltransferase At4g26220 (232 aa).

Lys-7 lines the substrate pocket. Residues Thr-49, Glu-71, 73–74 (GV), Ser-79, Asp-97, and Ala-126 contribute to the S-adenosyl-L-methionine site. Asp-149 is a substrate binding site. Asp-149 contributes to the a divalent metal cation binding site. Position 151 (Asp-151) interacts with S-adenosyl-L-methionine. Asp-175 and Asn-176 together coordinate a divalent metal cation.

Belongs to the class I-like SAM-binding methyltransferase superfamily. Cation-dependent O-methyltransferase family. CCoAMT subfamily. The cofactor is a divalent metal cation.

The enzyme catalyses (E)-caffeoyl-CoA + S-adenosyl-L-methionine = (E)-feruloyl-CoA + S-adenosyl-L-homocysteine + H(+). It participates in aromatic compound metabolism; phenylpropanoid biosynthesis. Functionally, methylates caffeoyl-CoA to feruloyl-CoA and 5-hydroxyferuloyl-CoA to sinapoyl-CoA. Plays a role in the synthesis of feruloylated polysaccharides. Involved in the reinforcement of the plant cell wall. Also involved in the responding to wounding or pathogen challenge by the increased formation of cell wall-bound ferulic acid polymers. The chain is Probable caffeoyl-CoA O-methyltransferase At4g26220 from Arabidopsis thaliana (Mouse-ear cress).